The chain runs to 686 residues: Secretin GspD 2 (686 aa).

The first 40 residues, 1 to 40 (MFWRDITLSVWRKKTTGLKTKKRLLPLVLAAALCSSPVWA), serve as a signal peptide directing secretion. The N0, contacts GspC2 stretch occupies residues 41–140 (EEATFTANFK…VGEGSDNYAG (100 aa)). The N1 stretch occupies residues 142–206 (EMVTKVVPVR…EVIQRVDHAG (65 aa)). The interval 207–279 (NRTEEVIPLD…LIRRLDSEME (73 aa)) is N2. The N3 stretch occupies residues 282-357 (GNSQVFYLKY…SLQSVIEQLD (76 aa)). Residues 360 to 627 (RAQVHVEALI…VFIRPTILRD (268 aa)) are secretin. A cap gate region spans residues 414 to 433 (PQKGSTVISENGATTINPDT). The segment at 629-686 (MAADGVSQRKYNYMRAEQIYRDEQGLSLMPHTAQPVLPAQNQALPPEVRAFLNAGRTR) is s domain, contacts AspS2.

The protein belongs to the bacterial secretin family. GSP D subfamily. Forms a cylindrical channel with 15 subunits, each of which interacts with the surrounding pilotin AspS2 proteins (also called GspS-beta). Interacts with inner cell membrane protein GspC2 in the periplasm. Forms multimers in the outer membrane. The isolated N0 domain forms dimers that self-assemble into rings.

The protein localises to the cell outer membrane. Its function is as follows. Part of a type II secretion system (T2SS, formerly general secretion pathway, GSP) for the export of folded proteins across the outer membrane. This subunit forms the outer membrane channel. In Escherichia coli O78:H11 (strain H10407 / ETEC), this protein is Secretin GspD 2 (gspD2).